The chain runs to 426 residues: Histidinol dehydrogenase (426 aa).

NAD(+)-binding residues include Y123, Q185, and N208. Substrate-binding residues include S231, Q253, and H256. Positions 253 and 256 each coordinate Zn(2+). Catalysis depends on proton acceptor residues E321 and H322. Positions 322, 355, 409, and 414 each coordinate substrate. Residue D355 participates in Zn(2+) binding. A Zn(2+)-binding site is contributed by H414.

Belongs to the histidinol dehydrogenase family. Requires Zn(2+) as cofactor.

The enzyme catalyses L-histidinol + 2 NAD(+) + H2O = L-histidine + 2 NADH + 3 H(+). The protein operates within amino-acid biosynthesis; L-histidine biosynthesis; L-histidine from 5-phospho-alpha-D-ribose 1-diphosphate: step 9/9. Catalyzes the sequential NAD-dependent oxidations of L-histidinol to L-histidinaldehyde and then to L-histidine. The sequence is that of Histidinol dehydrogenase from Bacillus licheniformis (strain ATCC 14580 / DSM 13 / JCM 2505 / CCUG 7422 / NBRC 12200 / NCIMB 9375 / NCTC 10341 / NRRL NRS-1264 / Gibson 46).